Consider the following 474-residue polypeptide: Uronate isomerase (474 aa).

The protein belongs to the metallo-dependent hydrolases superfamily. Uronate isomerase family.

It carries out the reaction D-glucuronate = D-fructuronate. The catalysed reaction is aldehydo-D-galacturonate = keto-D-tagaturonate. It participates in carbohydrate metabolism; pentose and glucuronate interconversion. The protein is Uronate isomerase of Photorhabdus laumondii subsp. laumondii (strain DSM 15139 / CIP 105565 / TT01) (Photorhabdus luminescens subsp. laumondii).